A 430-amino-acid chain; its full sequence is Trigger factor (430 aa).

Positions 157–242 (GDLVALETWS…AVEVSEPVLP (86 aa)) constitute a PPIase FKBP-type domain.

The protein belongs to the FKBP-type PPIase family. Tig subfamily.

The protein resides in the cytoplasm. It catalyses the reaction [protein]-peptidylproline (omega=180) = [protein]-peptidylproline (omega=0). Involved in protein export. Acts as a chaperone by maintaining the newly synthesized protein in an open conformation. Functions as a peptidyl-prolyl cis-trans isomerase. The chain is Trigger factor from Xanthomonas oryzae pv. oryzae (strain MAFF 311018).